The chain runs to 358 residues: tRNA (guanine(26)-N(2))-dimethyltransferase (358 aa).

Residues 5–354 enclose the Trm1 methyltransferase domain; that stretch reads VIRREGKAVF…ATYGEVERVL (350 aa). S-adenosyl-L-methionine-binding residues include arginine 39, arginine 69, aspartate 87, aspartate 113, and alanine 114.

Belongs to the class I-like SAM-binding methyltransferase superfamily. Trm1 family.

It carries out the reaction guanosine(26) in tRNA + 2 S-adenosyl-L-methionine = N(2)-dimethylguanosine(26) in tRNA + 2 S-adenosyl-L-homocysteine + 2 H(+). In terms of biological role, dimethylates a single guanine residue at position 26 of a number of tRNAs using S-adenosyl-L-methionine as donor of the methyl groups. This chain is tRNA (guanine(26)-N(2))-dimethyltransferase, found in Pyrobaculum calidifontis (strain DSM 21063 / JCM 11548 / VA1).